The chain runs to 135 residues: UPF0299 membrane protein PC1_1498 (135 aa).

4 helical membrane-spanning segments follow: residues 5-25, 30-50, 63-83, and 93-113; these read FIVCWQYLRAFALIYLCLLAG, ALLPFTIPGSIIGMLVLFTLL, GCHLLIRHMALLFVPIGVGVM, and FGPIVVSCLISTFIVMLVVGF.

The protein belongs to the UPF0299 family.

It is found in the cell inner membrane. The polypeptide is UPF0299 membrane protein PC1_1498 (Pectobacterium carotovorum subsp. carotovorum (strain PC1)).